The chain runs to 486 residues: Cobyric acid synthase (486 aa).

Residues Ala-250–Ala-438 form the GATase cobBQ-type domain. Cys-331 serves as the catalytic Nucleophile. His-430 is an active-site residue.

This sequence belongs to the CobB/CobQ family. CobQ subfamily.

It functions in the pathway cofactor biosynthesis; adenosylcobalamin biosynthesis. Functionally, catalyzes amidations at positions B, D, E, and G on adenosylcobyrinic A,C-diamide. NH(2) groups are provided by glutamine, and one molecule of ATP is hydrogenolyzed for each amidation. The chain is Cobyric acid synthase from Herminiimonas arsenicoxydans.